We begin with the raw amino-acid sequence, 82 residues long: Host transcription reprogramming factor 10 (82 aa).

The first 19 residues, 1–19, serve as a signal peptide directing secretion; sequence MQIFNMVSLVALFALGATA. The C2H2-type zinc-finger motif lies at 57 to 81; the sequence is WVCHACNKQFTTPAALQKHKDTVVH.

Its subcellular location is the secreted. The protein localises to the host nucleus. Functionally, probable secreted effector that translocates into the nuclei of host cells to reprogram the expression of targeted genes by binding on effector binding elements in rice. The polypeptide is Host transcription reprogramming factor 10 (Pyricularia oryzae (strain 70-15 / ATCC MYA-4617 / FGSC 8958) (Rice blast fungus)).